Reading from the N-terminus, the 248-residue chain is Histone H1, gonadal (248 aa).

Disordered stretches follow at residues 1–46 (PGSP…PPVL) and 115–248 (AVAK…KARK). The span at 9–39 (ASPRKSPRKSPKKSPRKASASPRRKAKRARA) shows a compositional bias: basic residues. Positions 41 to 115 (THPPVLEMVQ…GASGRFRVGA (75 aa)) constitute an H15 domain. Basic residues predominate over residues 118 to 248 (KPKKAKKTSA…KRRSPKKARK (131 aa)).

It belongs to the histone H1/H5 family. As to expression, sperm.

The protein localises to the nucleus. It localises to the chromosome. Functionally, histones H1 are necessary for the condensation of nucleosome chains into higher-order structures. This Parechinus angulosus (Angulate sea urchin) protein is Histone H1, gonadal.